We begin with the raw amino-acid sequence, 359 residues long: Heat-inducible transcription repressor HrcA (359 aa).

Belongs to the HrcA family.

Its function is as follows. Negative regulator of class I heat shock genes (grpE-dnaK-dnaJ and groELS operons). Prevents heat-shock induction of these operons. This Rhizobium meliloti (strain 1021) (Ensifer meliloti) protein is Heat-inducible transcription repressor HrcA.